The sequence spans 391 residues: MDQFIKQDETGDLIETGMNVANHFLSAPIQGTNSLSKASIIPGVAPVLIGNPEQKNIQHPTASHQGSKSKGRGSGVRSITVPPPEAGNGGTQIPEPLFAQTGQGGIVTTVHQDPTIQPTGSYRSVELAKIGKERMINRFVEKPRTSTPVTEFKRGGPGAAAQGQTIQEEGIDGNGASAGSKERSGSLSGATLYAHLSLPQQDSTPANVGIAPQSATSANEIMDLLRGMDARLQHLEQKVDKVLAQGSMVTQIKNELSTVKTTLATIEGMMATVKIMDPGNPTGVPVDELRRSFSDHVTIVSGPGDVSFSSSEEPTLYLDELARPVSKPRPAKQTKPQPVKDLAGRKVMITKMITDCVANPQMKQAFEQRLAKASTEDALNDIKRDIIRNAI.

Residues Thr10 and Thr16 each carry the phosphothreonine modification. Residues 54 to 65 (QKNIQHPTASHQ) show a composition bias toward polar residues. Disordered stretches follow at residues 54-98 (QKNI…EPLF) and 145-186 (TSTP…RSGS). A Phosphoserine modification is found at Ser69. A phosphothreonine mark is found at Thr91, Thr150, and Thr165. Ser188 is subject to Phosphoserine. Residues 218–245 (ANEIMDLLRGMDARLQHLEQKVDKVLAQ) are a coiled coil. Thr250 bears the Phosphothreonine mark. Residue Ser257 is modified to Phosphoserine. Residues Thr258 and Thr282 each carry the phosphothreonine modification. A phosphoserine mark is found at Ser292 and Ser294. Phosphothreonine is present on Thr298. A phosphoserine mark is found at Ser301 and Ser374. An interaction with the nucleoprotein region spans residues 343–391 (AGRKVMITKMITDCVANPQMKQAFEQRLAKASTEDALNDIKRDIIRNAI). Position 375 is a phosphothreonine (Thr375).

The protein belongs to the rubulavirus/avulavirus P protein family. In terms of assembly, homotetramer. Interacts (via multimerization domain) with polymerase L; this interaction forms the polymerase L-P complex. Interacts (via N-terminus) with N0 (via Ncore); this interaction allows P to chaperon N0 to avoid N polymerization before encapsidation. Interacts (via C-terminus) with N-RNA template; this interaction positions the polymerase on the template for both transcription and replication. Interacts with host RPS6KB1 kinase; this interaction may play a role in the viral replication and transcription.

The protein localises to the virion. In terms of biological role, essential cofactor of the RNA polymerase L that plays a central role in the transcription and replication by forming the polymerase complex with RNA polymerase L and recruiting L to the genomic N-RNA template for RNA synthesis. Also plays a central role in the encapsidation of nascent RNA chains by forming the encapsidation complex with the nucleocapsid protein N (N-P complex). Acts as a chaperone for newly synthesized free N protein, so-called N0, allowing encapsidation of nascent RNA chains during replication. The nucleoprotein protein N prevents excessive phosphorylation of P, which leads to down-regulation of viral transcription/ replication. Participates, together with N, in the formation of viral factories (viroplasms), which are large inclusions in the host cytoplasm where replication takes place. The chain is Phosphoprotein from Mumps virus genotype N (strain L-Zagreb vaccine) (MuV).